Here is a 155-residue protein sequence, read N- to C-terminus: Ribonuclease H (155 aa).

The region spanning 1–142 is the RNase H type-1 domain; it reads MLKQVEIFTD…CDELARNAAG (142 aa). Mg(2+) contacts are provided by aspartate 10, glutamate 48, aspartate 70, and aspartate 134.

The protein belongs to the RNase H family. In terms of assembly, monomer. Mg(2+) is required as a cofactor.

Its subcellular location is the cytoplasm. It catalyses the reaction Endonucleolytic cleavage to 5'-phosphomonoester.. In terms of biological role, endonuclease that specifically degrades the RNA of RNA-DNA hybrids. This chain is Ribonuclease H, found in Erwinia tasmaniensis (strain DSM 17950 / CFBP 7177 / CIP 109463 / NCPPB 4357 / Et1/99).